Here is a 744-residue protein sequence, read N- to C-terminus: Polyribonucleotide nucleotidyltransferase (744 aa).

Mg(2+) is bound by residues D487 and D493. Residues P554–V613 form the KH domain. In terms of domain architecture, S1 motif spans G623–K691. Residues K691–S744 form a disordered region. Residues S707 to D718 show a composition bias toward basic and acidic residues. A compositionally biased stretch (polar residues) spans E727–V736.

The protein belongs to the polyribonucleotide nucleotidyltransferase family. It depends on Mg(2+) as a cofactor.

It localises to the cytoplasm. It catalyses the reaction RNA(n+1) + phosphate = RNA(n) + a ribonucleoside 5'-diphosphate. In terms of biological role, involved in mRNA degradation. Catalyzes the phosphorolysis of single-stranded polyribonucleotides processively in the 3'- to 5'-direction. This is Polyribonucleotide nucleotidyltransferase from Rickettsia bellii (strain OSU 85-389).